Here is a 270-residue protein sequence, read N- to C-terminus: Formamidopyrimidine-DNA glycosylase (270 aa).

The active-site Schiff-base intermediate with DNA is the Pro2. Residue Glu3 is the Proton donor of the active site. Lys57 (proton donor; for beta-elimination activity) is an active-site residue. Residues His90, Arg109, and Arg151 each coordinate DNA. An FPG-type zinc finger spans residues 236–270 (QVYGRGGKLCMVCSNRLKEVRLGQRSTVYCTQCQR). Arg260 (proton donor; for delta-elimination activity) is an active-site residue.

It belongs to the FPG family. In terms of assembly, monomer. Zn(2+) serves as cofactor.

It carries out the reaction Hydrolysis of DNA containing ring-opened 7-methylguanine residues, releasing 2,6-diamino-4-hydroxy-5-(N-methyl)formamidopyrimidine.. It catalyses the reaction 2'-deoxyribonucleotide-(2'-deoxyribose 5'-phosphate)-2'-deoxyribonucleotide-DNA = a 3'-end 2'-deoxyribonucleotide-(2,3-dehydro-2,3-deoxyribose 5'-phosphate)-DNA + a 5'-end 5'-phospho-2'-deoxyribonucleoside-DNA + H(+). Functionally, involved in base excision repair of DNA damaged by oxidation or by mutagenic agents. Acts as a DNA glycosylase that recognizes and removes damaged bases. Has a preference for oxidized purines, such as 7,8-dihydro-8-oxoguanine (8-oxoG). Has AP (apurinic/apyrimidinic) lyase activity and introduces nicks in the DNA strand. Cleaves the DNA backbone by beta-delta elimination to generate a single-strand break at the site of the removed base with both 3'- and 5'-phosphates. In Idiomarina loihiensis (strain ATCC BAA-735 / DSM 15497 / L2-TR), this protein is Formamidopyrimidine-DNA glycosylase.